The primary structure comprises 681 residues: DNA ligase (681 aa).

Residues 45 to 49 (DFDFD), 94 to 95 (SL), and Glu-120 contribute to the NAD(+) site. Catalysis depends on Lys-122, which acts as the N6-AMP-lysine intermediate. NAD(+) contacts are provided by Arg-143, Glu-177, Lys-289, and Lys-313. Residues Cys-403, Cys-406, Cys-421, and Cys-426 each coordinate Zn(2+). Residues 593–681 (SDQQPFAGQS…SLKINFKNTI (89 aa)) form the BRCT domain.

Belongs to the NAD-dependent DNA ligase family. LigA subfamily. Mg(2+) is required as a cofactor. Mn(2+) serves as cofactor.

It catalyses the reaction NAD(+) + (deoxyribonucleotide)n-3'-hydroxyl + 5'-phospho-(deoxyribonucleotide)m = (deoxyribonucleotide)n+m + AMP + beta-nicotinamide D-nucleotide.. In terms of biological role, DNA ligase that catalyzes the formation of phosphodiester linkages between 5'-phosphoryl and 3'-hydroxyl groups in double-stranded DNA using NAD as a coenzyme and as the energy source for the reaction. It is essential for DNA replication and repair of damaged DNA. This is DNA ligase from Leptospira borgpetersenii serovar Hardjo-bovis (strain L550).